The chain runs to 144 residues: 3-dehydroquinate dehydratase (144 aa).

The Proton acceptor role is filled by Tyr24. The substrate site is built by Asn76, His82, and Asp89. The active-site Proton donor is His102. Substrate is bound by residues 103 to 104 (LS) and Arg113.

It belongs to the type-II 3-dehydroquinase family. In terms of assembly, homododecamer.

The enzyme catalyses 3-dehydroquinate = 3-dehydroshikimate + H2O. It participates in metabolic intermediate biosynthesis; chorismate biosynthesis; chorismate from D-erythrose 4-phosphate and phosphoenolpyruvate: step 3/7. Catalyzes a trans-dehydration via an enolate intermediate. In Bordetella petrii (strain ATCC BAA-461 / DSM 12804 / CCUG 43448), this protein is 3-dehydroquinate dehydratase.